Here is a 183-residue protein sequence, read N- to C-terminus: MEQRLAEFRAARKRAGLAAQPPAASQGAQTPGEKAEAAATLKAAPGWLKRFLVWKPRPASARAQPGLVQEAAQPQGSTSETPWNTAIPLPSCWDQSFLTNITFLKVLLWLVLLGLFVELEFGLAYFVLSLFYWMYVGTRGPEEKKEGEKSAYSVFNPGCEAIQGTLTAEQLERELQLRPLAGR.

Residues 1–105 (MEQRLAEFRA…SFLTNITFLK (105 aa)) are Cytoplasmic-facing. The interval 11–36 (ARKRAGLAAQPPAASQGAQTPGEKAE) is disordered. Residues 16 to 36 (GLAAQPPAASQGAQTPGEKAE) are compositionally biased toward low complexity. The tract at residues 91-105 (SCWDQSFLTNITFLK) is middle helical (MH). The segment at residues 106–126 (VLLWLVLLGLFVELEFGLAYF) is an intramembrane region (helical). Residues 127-183 (VLSLFYWMYVGTRGPEEKKEGEKSAYSVFNPGCEAIQGTLTAEQLERELQLRPLAGR) are Cytoplasmic-facing.

This sequence belongs to the SAYSD1 family. In terms of assembly, associates (via N-terminus) with ribosomes.

It localises to the endoplasmic reticulum membrane. The protein resides in the cytoplasmic vesicle membrane. Ufmylation 'reader' component of a translocation-associated quality control pathway, a mechanism that takes place when a ribosome has stalled during translation, and which is required to degrade clogged substrates. Specifically recognizes and binds ufmylated ribosomes when a ribosome has stalled, promoting the transport of stalled nascent chain via the TRAPP complex to lysosomes for degradation. This is SAYSvFN domain-containing protein 1 from Homo sapiens (Human).